The following is a 315-amino-acid chain: MGIWLNESSVDGFILLGIFSQSQTDLLLFSTVMLVFTVALCGNVLLILLIYTDPRLHTPMYFFLSQLSLMDLMLVCNIVPKMAVNFLSGRKSISFAGCGIQIGFFVSLVGSEGLLLGLMAYDRYVAISHPLHYPILMSQKVCLQIAGSSWAFGILDGIIQMVAAMSLPYCGSRYIDHFFCEVPALLKLACADTSLFDTLLFACCVFMLLLPFSIIVTSYARILGAVLRMHSAQSRKKALATCSSHLTAVSLFYGAAMFIYLRPRRYRAPSHDKVVSIFYTVLTPMLNPLIYSLRNREVMGALRKGLDRCRVGSQH.

Transmembrane regions (helical) follow at residues 31–51 (TVML…LLIY), 59–79 (PMYF…CNIV), 100–120 (IQIG…GLMA), 145–165 (IAGS…VAAM), 196–216 (FDTL…SIIV), 239–259 (LATC…AMFI), and 273–293 (KVVS…IYSL). Cys-98 and Cys-180 are joined by a disulfide.

The protein belongs to the G-protein coupled receptor 1 family.

Its subcellular location is the cell membrane. Functionally, odorant receptor. Activated by (+) and (-)-limonene. The protein is Olfactory receptor 2V1 of Mus musculus (Mouse).